We begin with the raw amino-acid sequence, 201 residues long: Ribonuclease HII (201 aa).

Positions 12–201 constitute an RNase H type-2 domain; that stretch reads GIVCGIDEVG…FAPVAQYMLF (190 aa). A divalent metal cation-binding residues include Asp18, Glu19, and Asp113.

Belongs to the RNase HII family. Mn(2+) is required as a cofactor. It depends on Mg(2+) as a cofactor.

It localises to the cytoplasm. The catalysed reaction is Endonucleolytic cleavage to 5'-phosphomonoester.. Endonuclease that specifically degrades the RNA of RNA-DNA hybrids. In Paramagnetospirillum magneticum (strain ATCC 700264 / AMB-1) (Magnetospirillum magneticum), this protein is Ribonuclease HII (rnhB).